Consider the following 364-residue polypeptide: Fructose-bisphosphate aldolase B (364 aa).

An N-acetylalanine modification is found at Ala2. Lys13 carries the post-translational modification N6-succinyllysine. A Phosphoserine modification is found at Ser36. Thr39 bears the Phosphothreonine mark. Arg43 contributes to the beta-D-fructose 1,6-bisphosphate binding site. Residue Ser89 is modified to Phosphoserine. At Thr119 the chain carries Phosphothreonine. Lys121 is modified (N6-succinyllysine). Ser132 is subject to Phosphoserine. The active-site Proton acceptor is the Glu188. Lys230 acts as the Schiff-base intermediate with dihydroxyacetone-P in catalysis. Residues Ser272, Ser276, Ser299, and Ser301 each carry the phosphoserine modification. Ser272–Gly274 is a binding site for beta-D-fructose 1,6-bisphosphate. Position 304 (Arg304) interacts with beta-D-fructose 1,6-bisphosphate. Ser309 is modified (phosphoserine). The residue at position 317 (Lys317) is an N6-succinyllysine.

The protein belongs to the class I fructose-bisphosphate aldolase family. In terms of assembly, homotetramer. Interacts with BBS1, BBS2, BBS4 and BBS7. Forms a ternary complex with G6PD and TP53; this interaction is direct.

The protein resides in the cytoplasm. Its subcellular location is the cytosol. The protein localises to the cytoskeleton. It is found in the microtubule organizing center. It localises to the centrosome. The protein resides in the centriolar satellite. It carries out the reaction beta-D-fructose 1,6-bisphosphate = D-glyceraldehyde 3-phosphate + dihydroxyacetone phosphate. The catalysed reaction is beta-D-fructose 1-phosphate = D-glyceraldehyde + dihydroxyacetone phosphate. It functions in the pathway carbohydrate degradation; glycolysis; D-glyceraldehyde 3-phosphate and glycerone phosphate from D-glucose: step 4/4. The protein operates within carbohydrate biosynthesis; gluconeogenesis. It participates in carbohydrate metabolism; fructose metabolism. In terms of biological role, catalyzes the aldol cleavage of fructose 1,6-biphosphate to form two triosephosphates dihydroxyacetone phosphate and D-glyceraldehyde 3-phosphate in glycolysis as well as the reverse stereospecific aldol addition reaction in gluconeogenesis. In fructolysis, metabolizes fructose 1-phosphate derived from the phosphorylation of dietary fructose by fructokinase into dihydroxyacetone phosphate and D-glyceraldehyde. Acts as an adapter independently of its enzymatic activity, exerts a tumor suppressor role by stabilizing the ternary complex with G6PD and TP53 to inhibit G6PD activity and keep oxidative pentose phosphate metabolism in check. The protein is Fructose-bisphosphate aldolase B (Aldob) of Rattus norvegicus (Rat).